Reading from the N-terminus, the 827-residue chain is MAFSGALTLTDLNDYLGPSQACIKPVQAADVPSQDHSDVSALAASASTHIAIDHDGAYYESSTPPSSSLSAADSRPRQRTKLETAQISLNDCLACSGCVTSAESVLITMQSQDEMRRAIAELNQSNANKLVVASISTQSLASLSAKYTFQHPQPSSSRSASTSTLPLRVLLHRISYFLKTVFGFDHVYDTTFARHIALKEHQREFFQRRENARKRAKLSNAPADDDDRLHPDQVDGPTLPMLASACPGWICYAEKTHGELLPYISTTKSPQQVAGVIAKRFLPERLGLLAPSAPDQPSIYHVTVMPCYDKKLEASRPDFYDDITGTKEVDCVLTTGELDKLMLDEAFDICTPVPGEQEAIQESIAELSLQQAFNTPNPDVGSASVSMMPRLPRLPQLLDQPGSSSGGYLFLLMRAVWLDWISVHWDSLPLSVREQGILPKLDVRVIRTTDFTEFVLRAPTQLVEPCNDDTSQSSILFRGAQCYGFRNLQNLVRKLQKQTGVRNTRGAAARLVDADGNAIGAAAARNRASSAKARARGRGGMMRRARAGAAAVVKSSPLNPDAEAVDVTQLQLSTAHEEDERGYDYVEVMACPSGCVNGGGQIRPPTQSDVDVTRSSTTVDNHATDPEGYTKGGWAADQAGDHDGLELMLNKTCSNKTSAVPDEADEEKEVRGWQGTSKEWVRRVEEAYWQDSSVAQTRVTVAAVNRAVDQGGANDSGSSTPTLVGSGANTPLSSSNAKSIRVEDHQRLLESLAVSNAERAQRTRVVKLGGDAMAYADVLAELVVNELCLLAAPAGDALALDSARDKLFRTQYRAVQDEAVNGLAVQW.

[4Fe-4S] cluster is bound at residue Cys22. The disordered stretch occupies residues 57-77; it reads AYYESSTPPSSSLSAADSRPR. Low complexity predominate over residues 61–73; sequence SSTPPSSSLSAAD. The [4Fe-4S] cluster site is built by Cys92, Cys95, and Cys98. Residues 209–231 form a disordered region; that stretch reads RENARKRAKLSNAPADDDDRLHP. [4Fe-4S] cluster contacts are provided by Cys246, Cys307, Cys591, and Cys595. 2 disordered regions span residues 599-637 and 709-739; these read GGQI…WAAD and DQGG…NAKS. Polar residues-rich tracts occupy residues 604–621 and 713–738; these read PPTQ…TVDN and ANDS…SNAK.

This sequence belongs to the NARF family.

In terms of biological role, component of the cytosolic Fe/S protein assembly machinery. Required for maturation of extramitochondrial Fe/S proteins. May play a role in the transfer of pre-assembled Fe/S clusters to target apoproteins. In Mycosarcoma maydis (Corn smut fungus), this protein is Cytosolic Fe-S cluster assembly factor NAR1 (NAR1).